The following is a 1134-amino-acid chain: DNA polymerase II large subunit (1134 aa).

The protein belongs to the archaeal DNA polymerase II family. In terms of assembly, heterodimer of a large subunit and a small subunit.

The catalysed reaction is DNA(n) + a 2'-deoxyribonucleoside 5'-triphosphate = DNA(n+1) + diphosphate. The enzyme catalyses Exonucleolytic cleavage in the 3'- to 5'-direction to yield nucleoside 5'-phosphates.. Its function is as follows. Possesses two activities: a DNA synthesis (polymerase) and an exonucleolytic activity that degrades single-stranded DNA in the 3'- to 5'-direction. Has a template-primer preference which is characteristic of a replicative DNA polymerase. This Methanocella arvoryzae (strain DSM 22066 / NBRC 105507 / MRE50) protein is DNA polymerase II large subunit.